Here is a 172-residue protein sequence, read N- to C-terminus: Translation initiation factor IF-3 (172 aa).

The protein belongs to the IF-3 family. In terms of assembly, monomer.

The protein resides in the cytoplasm. Its function is as follows. IF-3 binds to the 30S ribosomal subunit and shifts the equilibrium between 70S ribosomes and their 50S and 30S subunits in favor of the free subunits, thus enhancing the availability of 30S subunits on which protein synthesis initiation begins. The chain is Translation initiation factor IF-3 from Sulfurimonas denitrificans (strain ATCC 33889 / DSM 1251) (Thiomicrospira denitrificans (strain ATCC 33889 / DSM 1251)).